The primary structure comprises 181 residues: Transcriptional repressor NrdR (181 aa).

Residues 3 to 34 (CLFCQHTDTRVIDSRVSEDGATIRRRRECEAC) fold into a zinc finger. The 91-residue stretch at 49 to 139 (PVIIKKDGGR…VYRSFQDVAD (91 aa)) folds into the ATP-cone domain.

Belongs to the NrdR family. Requires Zn(2+) as cofactor.

Negatively regulates transcription of bacterial ribonucleotide reductase nrd genes and operons by binding to NrdR-boxes. The chain is Transcriptional repressor NrdR from Xylella fastidiosa (strain M12).